Reading from the N-terminus, the 626-residue chain is Chaperone protein HtpG (626 aa).

The tract at residues 1–341 (MAKKEFKAES…SEDLSLNISR (341 aa)) is a; substrate-binding. The b stretch occupies residues 342-552 (EMLQHDRQLK…DGEVTIEMEK (211 aa)). Positions 553–626 (ILNAMPDSQN…FTNNICKVMV (74 aa)) are c.

The protein belongs to the heat shock protein 90 family. Homodimer.

It is found in the cytoplasm. Molecular chaperone. Has ATPase activity. This Bacillus subtilis (strain 168) protein is Chaperone protein HtpG.